Consider the following 383-residue polypeptide: Protein delta homolog 1 (383 aa).

The N-terminal stretch at 1–23 (MIATGALLRVLLLLLAFGHSTYG) is a signal peptide. 6 EGF-like domains span residues 24-55 (AECD…PLCE), 59-86 (TSPG…KFCE), 88-125 (DIRA…KDCQ), 127-168 (KAGP…NFCE), 170-206 (VTNS…KTCS), and 208-245 (PVSN…PTCA). At 24-306 (AECDPACDPQ…PLLTEGQAIC (283 aa)) the chain is on the extracellular side. 17 disulfides stabilise this stretch: Cys-26–Cys-37, Cys-30–Cys-43, Cys-45–Cys-54, Cys-63–Cys-68, Cys-76–Cys-85, Cys-92–Cys-103, Cys-97–Cys-113, Cys-115–Cys-124, Cys-131–Cys-144, Cys-138–Cys-156, Cys-158–Cys-167, Cys-174–Cys-185, Cys-179–Cys-194, Cys-196–Cys-205, Cys-212–Cys-223, Cys-217–Cys-233, and Cys-235–Cys-244. A helical membrane pass occupies residues 307–327 (FTILGVLTSLVVLGTVAIVFL). Residues 328 to 383 (NKCEAWVSNLRYNHMLRKKKNLLLQYNSGEELAVNIIFPEKIDMTTFNKEAGDEDI) lie on the Cytoplasmic side of the membrane.

As to quaternary structure, monomer. Interacts with SH3RF2. Glycosylated. In terms of tissue distribution, pancreas and adrenal glands (at protein level).

It localises to the membrane. Its subcellular location is the cytoplasm. In terms of biological role, may have a role in neuroendocrine differentiation. Inhibits adipocyte differentiation. The chain is Protein delta homolog 1 (Dlk1) from Rattus norvegicus (Rat).